Here is a 1363-residue protein sequence, read N- to C-terminus: Spike glycoprotein (1363 aa).

Residues 1–13 form the signal peptide; it reads MFLILLISLPMAF. Residues 14 to 1307 are Extracellular-facing; the sequence is AVIGDLKCTT…GTYEYYVKWP (1294 aa). Residues 15-298 form the BetaCoV S1-NTD domain; sequence VIGDLKCTTV…DFMSEIKCKT (284 aa). 5 cysteine pairs are disulfide-bonded: Cys21/Cys165, Cys160/Cys193, Cys172/Cys252, Cys286/Cys296, and Cys331/Cys356. N-linked (GlcNAc...) asparagine; by host glycosylation is found at Asn59 and Asn133. Asn198 carries N-linked (GlcNAc...) asparagine; by host glycosylation. A BetaCoV S1-CTD domain is found at 329 to 617; sequence PDCNIEAWLN…DVNSGTTCST (289 aa). Asn359 carries N-linked (GlcNAc...) asparagine; by host glycosylation. 2 disulfides stabilise this stretch: Cys374–Cys427 and Cys386–Cys615. N-linked (GlcNAc...) asparagine; by host glycans are attached at residues Asn437, Asn649, Asn676, Asn696, Asn714, Asn739, and Asn788. Fusion peptide stretches follow at residues 914 to 935 and 933 to 953; these read SAIE…VEAY and EAYN…VQSY. A glycan (N-linked (GlcNAc...) asparagine; by host) is linked at Asn937. Cysteines 938 and 949 form a disulfide. The tract at residues 1014–1064 is heptad repeat 1; sequence QKLIANAFNNALDAIQEGFDATNSALVKIQAVVNANAEALNNLLQQLSNRF. Residues 1043 to 1087 adopt a coiled-coil conformation; that stretch reads QAVVNANAEALNNLLQQLSNRFGAISSSLQEILSRLDALEAQAQI. N-linked (GlcNAc...) asparagine; by host glycans are attached at residues Asn1194, Asn1224, Asn1234, Asn1253, Asn1267, and Asn1288. A heptad repeat 2 region spans residues 1258-1296; sequence APDLSLDYINVTFLDLQDEMNRLQEAIKVLNQSYINLKD. Residues 1269–1297 are a coiled coil; it reads TFLDLQDEMNRLQEAIKVLNQSYINLKDI. A helical membrane pass occupies residues 1308-1328; the sequence is WYVWLLIGFAGVAMLVLLFFI. Residues 1329–1363 lie on the Cytoplasmic side of the membrane; the sequence is CCCTGCGTSCFKICGGCCDDYTGHQELVIKTSHDD. Residues 1359–1363 carry the KxHxx motif; sequence TSHDD.

It belongs to the betacoronaviruses spike protein family. As to quaternary structure, homotrimer; each monomer consists of a S1 and a S2 subunit. The resulting peplomers protrude from the virus surface as spikes. Post-translationally, specific enzymatic cleavages in vivo yield mature proteins. The precursor is processed into S1 and S2 by host cell furin or another cellular protease to yield the mature S1 and S2 proteins. Additionally, a second cleavage leads to the release of a fusion peptide after viral attachment to host cell receptor. In terms of processing, the cytoplasmic Cys-rich domain is palmitoylated. Spike glycoprotein is digested within host endosomes.

The protein localises to the virion membrane. It localises to the host endoplasmic reticulum-Golgi intermediate compartment membrane. It is found in the host cell membrane. Functionally, attaches the virion to the cell membrane by interacting with host receptor, initiating the infection. In terms of biological role, mediates fusion of the virion and cellular membranes by acting as a class I viral fusion protein. Under the current model, the protein has at least three conformational states: pre-fusion native state, pre-hairpin intermediate state, and post-fusion hairpin state. During viral and target cell membrane fusion, the coiled coil regions (heptad repeats) assume a trimer-of-hairpins structure, positioning the fusion peptide in close proximity to the C-terminal region of the ectodomain. The formation of this structure appears to drive apposition and subsequent fusion of viral and target cell membranes. Its function is as follows. Acts as a viral fusion peptide which is unmasked following S2 cleavage occurring upon virus endocytosis. The chain is Spike glycoprotein from Bovine coronavirus (strain vaccine) (BCoV).